Here is a 295-residue protein sequence, read N- to C-terminus: Small ribosomal subunit biogenesis GTPase RsgA (295 aa).

The region spanning 65–223 (KNQLVRPPVA…VLDTPGFTAL (159 aa)) is the CP-type G domain. Residues 114–117 (NKVD) and 165–173 (GPSGVGKSS) each bind GTP. Zn(2+)-binding residues include C246, C251, H253, and C259.

Belongs to the TRAFAC class YlqF/YawG GTPase family. RsgA subfamily. As to quaternary structure, monomer. Associates with 30S ribosomal subunit, binds 16S rRNA. Zn(2+) is required as a cofactor.

Its subcellular location is the cytoplasm. Functionally, one of several proteins that assist in the late maturation steps of the functional core of the 30S ribosomal subunit. Helps release RbfA from mature subunits. May play a role in the assembly of ribosomal proteins into the subunit. Circularly permuted GTPase that catalyzes slow GTP hydrolysis, GTPase activity is stimulated by the 30S ribosomal subunit. This is Small ribosomal subunit biogenesis GTPase RsgA from Caldanaerobacter subterraneus subsp. tengcongensis (strain DSM 15242 / JCM 11007 / NBRC 100824 / MB4) (Thermoanaerobacter tengcongensis).